Consider the following 245-residue polypeptide: 2,3-bisphosphoglycerate-dependent phosphoglycerate mutase (245 aa).

Substrate is bound by residues 8 to 15 (RHGQSLWN), 21 to 22 (TG), R60, 87 to 90 (ERHY), K98, 114 to 115 (RR), and 183 to 184 (GN). The active-site Tele-phosphohistidine intermediate is H9. Catalysis depends on E87, which acts as the Proton donor/acceptor.

This sequence belongs to the phosphoglycerate mutase family. BPG-dependent PGAM subfamily.

It carries out the reaction (2R)-2-phosphoglycerate = (2R)-3-phosphoglycerate. The protein operates within carbohydrate degradation; glycolysis; pyruvate from D-glyceraldehyde 3-phosphate: step 3/5. Its function is as follows. Catalyzes the interconversion of 2-phosphoglycerate and 3-phosphoglycerate. This Bacillus cereus (strain ATCC 14579 / DSM 31 / CCUG 7414 / JCM 2152 / NBRC 15305 / NCIMB 9373 / NCTC 2599 / NRRL B-3711) protein is 2,3-bisphosphoglycerate-dependent phosphoglycerate mutase.